The primary structure comprises 36 residues: Photosystem I reaction center subunit VIII (36 aa).

Residues 9–29 (IFVPLVGLVFPAVAMASLFLY) form a helical membrane-spanning segment.

This sequence belongs to the PsaI family.

It is found in the plastid. Its subcellular location is the chloroplast thylakoid membrane. Functionally, may help in the organization of the PsaL subunit. The polypeptide is Photosystem I reaction center subunit VIII (Ostreococcus tauri).